The chain runs to 225 residues: 3-dehydroquinate dehydratase (225 aa).

3-dehydroquinate-binding positions include Ser6, 30–32, and Arg62; that span reads EWR. His118 functions as the Proton donor/acceptor in the catalytic mechanism. The active-site Schiff-base intermediate with substrate is Lys143. 3-dehydroquinate is bound by residues Arg186, Ser205, and Gln209.

This sequence belongs to the type-I 3-dehydroquinase family. In terms of assembly, homodimer.

It carries out the reaction 3-dehydroquinate = 3-dehydroshikimate + H2O. It functions in the pathway metabolic intermediate biosynthesis; chorismate biosynthesis; chorismate from D-erythrose 4-phosphate and phosphoenolpyruvate: step 3/7. Its function is as follows. Involved in the third step of the chorismate pathway, which leads to the biosynthesis of aromatic amino acids. Catalyzes the cis-dehydration of 3-dehydroquinate (DHQ) and introduces the first double bond of the aromatic ring to yield 3-dehydroshikimate. This is 3-dehydroquinate dehydratase from Streptococcus pneumoniae (strain P1031).